Here is a 464-residue protein sequence, read N- to C-terminus: Cyclic 2,3-diphosphoglycerate synthetase (464 aa).

The protein belongs to the cyclic 2,3-diphosphoglycerate synthetase family.

Its subcellular location is the cytoplasm. The catalysed reaction is (2R)-2,3-bisphosphoglycerate + ATP + H(+) = cyclic (2R)-2,3-bisphosphoglycerate + ADP + phosphate. With respect to regulation, activity decreases in response to phosphate limitation. Its function is as follows. Catalyzes the formation of cyclic 2,3-diphosphoglycerate (cDPG) by formation of an intramolecular phosphoanhydride bond at the expense of ATP. Not able to catalyze cDPG hydrolysis. May be involved in osmotic balance. The sequence is that of Cyclic 2,3-diphosphoglycerate synthetase (cpgS) from Methanothermobacter thermautotrophicus (strain ATCC 29096 / DSM 1053 / JCM 10044 / NBRC 100330 / Delta H) (Methanobacterium thermoautotrophicum).